The following is a 130-amino-acid chain: Sulfurtransferase TusD (130 aa).

Cysteine 80 functions as the Cysteine persulfide intermediate in the catalytic mechanism.

Belongs to the DsrE/TusD family. Heterohexamer, formed by a dimer of trimers. The hexameric TusBCD complex contains 2 copies each of TusB, TusC and TusD. The TusBCD complex interacts with TusE.

It is found in the cytoplasm. Functionally, part of a sulfur-relay system required for 2-thiolation of 5-methylaminomethyl-2-thiouridine (mnm(5)s(2)U) at tRNA wobble positions. Accepts sulfur from TusA and transfers it in turn to TusE. This is Sulfurtransferase TusD from Sodalis glossinidius (strain morsitans).